We begin with the raw amino-acid sequence, 299 residues long: DNA-binding transcriptional activator HetR (299 aa).

The active site involves Ser152.

This sequence belongs to the peptidase S48 family. Homodimer; disulfide-linked.

In terms of biological role, might be involved in temporal and/or spatial regulation of nitrogen fixation. Dimerization is required for DNA-binding. Has both a protease and a DNA-binding activity. The chain is DNA-binding transcriptional activator HetR from Leptolyngbya boryana (Plectonema boryanum).